The sequence spans 515 residues: Bifunctional dihydrofolate reductase-thymidylate synthase (515 aa).

Residues 26–228 (AFSIVVAADQ…LSYEIMKYVP (203 aa)) form the DHFR domain. Residue valine 30 coordinates substrate. NADP(+) is bound by residues alanine 32, 38 to 44 (GIGDGET), 81 to 83 (RKT), and 101 to 104 (LSCR). 3 residues coordinate substrate: isoleucine 154, tyrosine 160, and threonine 178. Position 155 to 162 (155 to 162 (GGARVYTE)) interacts with NADP(+). Residues 233–515 (ERQYLELIDR…YPPIKMEMAV (283 aa)) are thymidylate synthase. DUMP is bound at residue arginine 253. Cysteine 395 is an active-site residue. Residues histidine 396, 416–420 (QRCCD), asparagine 428, and 458–460 (HVY) contribute to the dUMP site.

In the N-terminal section; belongs to the dihydrofolate reductase family. This sequence in the C-terminal section; belongs to the thymidylate synthase family.

The enzyme catalyses (6S)-5,6,7,8-tetrahydrofolate + NADP(+) = 7,8-dihydrofolate + NADPH + H(+). It catalyses the reaction dUMP + (6R)-5,10-methylene-5,6,7,8-tetrahydrofolate = 7,8-dihydrofolate + dTMP. Its pathway is cofactor biosynthesis; tetrahydrofolate biosynthesis; 5,6,7,8-tetrahydrofolate from 7,8-dihydrofolate: step 1/1. In terms of biological role, bifunctional enzyme. Involved in de novo dTMP biosynthesis. Key enzyme in folate metabolism. Catalyzes an essential reaction for de novo glycine and purine synthesis, DNA precursor synthesis, and for the conversion of dUMP to dTMP. This Crithidia fasciculata protein is Bifunctional dihydrofolate reductase-thymidylate synthase.